A 577-amino-acid polypeptide reads, in one-letter code: Sulfite reductase [NADPH] hemoprotein beta-component (577 aa).

Positions 440, 446, 486, and 490 each coordinate [4Fe-4S] cluster. A siroheme-binding site is contributed by Cys490.

It belongs to the nitrite and sulfite reductase 4Fe-4S domain family. In terms of assembly, alpha(8)-beta(8). The alpha component is a flavoprotein, the beta component is a hemoprotein. Siroheme is required as a cofactor. [4Fe-4S] cluster serves as cofactor.

It carries out the reaction hydrogen sulfide + 3 NADP(+) + 3 H2O = sulfite + 3 NADPH + 4 H(+). Its pathway is sulfur metabolism; hydrogen sulfide biosynthesis; hydrogen sulfide from sulfite (NADPH route): step 1/1. In terms of biological role, component of the sulfite reductase complex that catalyzes the 6-electron reduction of sulfite to sulfide. This is one of several activities required for the biosynthesis of L-cysteine from sulfate. The sequence is that of Sulfite reductase [NADPH] hemoprotein beta-component from Vibrio cholerae serotype O1 (strain ATCC 39315 / El Tor Inaba N16961).